A 547-amino-acid chain; its full sequence is Glucose-6-phosphate isomerase 2 (547 aa).

Glutamate 351 (proton donor) is an active-site residue. Active-site residues include histidine 382 and lysine 508.

It belongs to the GPI family.

The protein resides in the cytoplasm. The enzyme catalyses alpha-D-glucose 6-phosphate = beta-D-fructose 6-phosphate. It participates in carbohydrate biosynthesis; gluconeogenesis. Its pathway is carbohydrate degradation; glycolysis; D-glyceraldehyde 3-phosphate and glycerone phosphate from D-glucose: step 2/4. In terms of biological role, catalyzes the reversible isomerization of glucose-6-phosphate to fructose-6-phosphate. The chain is Glucose-6-phosphate isomerase 2 from Neisseria meningitidis serogroup B (strain ATCC BAA-335 / MC58).